The following is a 622-amino-acid chain: Chaperone protein HscA homolog (622 aa).

The protein belongs to the heat shock protein 70 family.

Its function is as follows. Chaperone involved in the maturation of iron-sulfur cluster-containing proteins. Has a low intrinsic ATPase activity which is markedly stimulated by HscB. This is Chaperone protein HscA homolog from Burkholderia orbicola (strain MC0-3).